The chain runs to 101 residues: Putative pterin-4-alpha-carbinolamine dehydratase (101 aa).

This sequence belongs to the pterin-4-alpha-carbinolamine dehydratase family.

The catalysed reaction is (4aS,6R)-4a-hydroxy-L-erythro-5,6,7,8-tetrahydrobiopterin = (6R)-L-erythro-6,7-dihydrobiopterin + H2O. This is Putative pterin-4-alpha-carbinolamine dehydratase from Rhizobium etli (strain ATCC 51251 / DSM 11541 / JCM 21823 / NBRC 15573 / CFN 42).